Here is a 581-residue protein sequence, read N- to C-terminus: DEAD-box ATP-dependent RNA helicase 22 (581 aa).

The Q motif motif lies at 80-108 (VSWKSLGLSDNVSIALRDSGFDRPSLTQA). Positions 111-380 (IPSILSGKDV…GGILKHMFQD (270 aa)) constitute a Helicase ATP-binding domain. 124-131 (AETGSGKT) lines the ATP pocket. Residues 244 to 247 (DEAD) carry the DEAD box motif. The 159-residue stretch at 408–566 (QVDALIEAVK…GFRNKVKKRA (159 aa)) folds into the Helicase C-terminal domain.

It belongs to the DEAD box helicase family.

It catalyses the reaction ATP + H2O = ADP + phosphate + H(+). This is DEAD-box ATP-dependent RNA helicase 22 (RH22) from Arabidopsis thaliana (Mouse-ear cress).